The following is a 410-amino-acid chain: Adenosylhomocysteinase (410 aa).

Substrate is bound by residues Asp-117 and Glu-142. Residue 143-145 (TTT) coordinates NAD(+). Residues Lys-172 and Asp-176 each coordinate substrate. Residues Asn-177, 206–211 (GYGYCG), Glu-229, 285–287 (AGH), and Asn-332 contribute to the NAD(+) site.

The protein belongs to the adenosylhomocysteinase family. The cofactor is NAD(+).

It is found in the cytoplasm. The enzyme catalyses S-adenosyl-L-homocysteine + H2O = L-homocysteine + adenosine. The protein operates within amino-acid biosynthesis; L-homocysteine biosynthesis; L-homocysteine from S-adenosyl-L-homocysteine: step 1/1. In terms of biological role, may play a key role in the regulation of the intracellular concentration of adenosylhomocysteine. The polypeptide is Adenosylhomocysteinase (Thermoplasma acidophilum (strain ATCC 25905 / DSM 1728 / JCM 9062 / NBRC 15155 / AMRC-C165)).